The chain runs to 171 residues: UPF0312 protein SAOUHSC_03022 (171 aa).

This sequence belongs to the UPF0312 family.

The sequence is that of UPF0312 protein SAOUHSC_03022 from Staphylococcus aureus (strain NCTC 8325 / PS 47).